The sequence spans 823 residues: Translation initiation factor IF-2 (823 aa).

2 disordered regions span residues 30–66 (VPPSLARGTSTGKSFTTVEVRSKKRRPGEYISHDDKR) and 156–192 (TPSHSNKSGHDDRGGKKYAHGATGRHKEKEGVSIKKV). Over residues 36–48 (RGTSTGKSFTTVE) the composition is skewed to polar residues. Basic and acidic residues predominate over residues 56 to 66 (PGEYISHDDKR). In terms of domain architecture, tr-type G spans 322–491 (PRPPVVTVMG…LLLAEMLELS (170 aa)). The tract at residues 331–338 (GHVDHGKT) is G1. A GTP-binding site is contributed by 331–338 (GHVDHGKT). Residues 356–360 (GITQH) are G2. The interval 377-380 (DTPG) is G3. GTP is bound by residues 377 to 381 (DTPGH) and 431 to 434 (NKID). The interval 431-434 (NKID) is G4. Residues 467–469 (SAK) are G5.

Belongs to the TRAFAC class translation factor GTPase superfamily. Classic translation factor GTPase family. IF-2 subfamily.

It localises to the cytoplasm. In terms of biological role, one of the essential components for the initiation of protein synthesis. Protects formylmethionyl-tRNA from spontaneous hydrolysis and promotes its binding to the 30S ribosomal subunits. Also involved in the hydrolysis of GTP during the formation of the 70S ribosomal complex. The polypeptide is Translation initiation factor IF-2 (Anaplasma phagocytophilum (strain HZ)).